The chain runs to 231 residues: Large ribosomal subunit protein uL1 (231 aa).

It belongs to the universal ribosomal protein uL1 family. Part of the 50S ribosomal subunit.

Functionally, binds directly to 23S rRNA. The L1 stalk is quite mobile in the ribosome, and is involved in E site tRNA release. In terms of biological role, protein L1 is also a translational repressor protein, it controls the translation of the L11 operon by binding to its mRNA. This Neisseria gonorrhoeae (strain ATCC 700825 / FA 1090) protein is Large ribosomal subunit protein uL1.